Here is a 75-residue protein sequence, read N- to C-terminus: Defensin-like protein 58 (75 aa).

The first 23 residues, 1–23 (MNITKRYVVIFFLVMLTKSLSNS), serve as a signal peptide directing secretion. 4 disulfides stabilise this stretch: C39–C73, C43–C66, C52–C71, and C56–C72.

This sequence belongs to the DEFL family.

The protein resides in the secreted. This is Defensin-like protein 58 from Arabidopsis thaliana (Mouse-ear cress).